The chain runs to 250 residues: Sulfate transporter CysZ (250 aa).

The next 4 helical transmembrane spans lie at 27–47 (FVVL…YYLF), 64–84 (FLSW…LATF), 150–170 (FLLL…WFLF), and 210–230 (MLVA…PVAV).

The protein belongs to the CysZ family.

It is found in the cell inner membrane. Its function is as follows. High affinity, high specificity proton-dependent sulfate transporter, which mediates sulfate uptake. Provides the sulfur source for the cysteine synthesis pathway. This Vibrio cholerae serotype O1 (strain ATCC 39315 / El Tor Inaba N16961) protein is Sulfate transporter CysZ.